The following is a 163-amino-acid chain: ATP synthase subunit delta, chloroplastic (163 aa).

This sequence belongs to the ATPase delta chain family. In terms of assembly, F-type ATPases have 2 components, F(1) - the catalytic core - and F(0) - the membrane proton channel. F(1) has five subunits: alpha(3), beta(3), gamma(1), delta(1), epsilon(1). CF(0) has four main subunits: a(1), b(1), b'(1) and c(10-14). The alpha and beta chains form an alternating ring which encloses part of the gamma chain. F(1) is attached to F(0) by a central stalk formed by the gamma and epsilon chains, while a peripheral stalk is formed by the delta, b and b' chains.

The protein localises to the plastid. The protein resides in the chloroplast thylakoid membrane. F(1)F(0) ATP synthase produces ATP from ADP in the presence of a proton or sodium gradient. F-type ATPases consist of two structural domains, F(1) containing the extramembraneous catalytic core and F(0) containing the membrane proton channel, linked together by a central stalk and a peripheral stalk. During catalysis, ATP synthesis in the catalytic domain of F(1) is coupled via a rotary mechanism of the central stalk subunits to proton translocation. Its function is as follows. This protein is part of the stalk that links CF(0) to CF(1). It either transmits conformational changes from CF(0) to CF(1) or is implicated in proton conduction. The chain is ATP synthase subunit delta, chloroplastic from Cyanidioschyzon merolae (strain NIES-3377 / 10D) (Unicellular red alga).